Reading from the N-terminus, the 125-residue chain is Small ribosomal subunit protein uS13 (125 aa).

Positions 92–125 (RRSLPARGQNTQTNARTRKGRRKTVAGKKKAVKK) are disordered. The span at 107 to 125 (RTRKGRRKTVAGKKKAVKK) shows a compositional bias: basic residues.

Belongs to the universal ribosomal protein uS13 family. As to quaternary structure, part of the 30S ribosomal subunit. Forms a loose heterodimer with protein S19. Forms two bridges to the 50S subunit in the 70S ribosome.

Functionally, located at the top of the head of the 30S subunit, it contacts several helices of the 16S rRNA. In the 70S ribosome it contacts the 23S rRNA (bridge B1a) and protein L5 of the 50S subunit (bridge B1b), connecting the 2 subunits; these bridges are implicated in subunit movement. Contacts the tRNAs in the A and P-sites. The chain is Small ribosomal subunit protein uS13 from Chlorobium phaeobacteroides (strain BS1).